The following is a 277-amino-acid chain: Ribosomal RNA small subunit methyltransferase A (277 aa).

S-adenosyl-L-methionine contacts are provided by asparagine 23, leucine 25, glycine 50, glutamate 75, aspartate 98, and asparagine 121.

It belongs to the class I-like SAM-binding methyltransferase superfamily. rRNA adenine N(6)-methyltransferase family. RsmA subfamily.

It localises to the cytoplasm. The enzyme catalyses adenosine(1518)/adenosine(1519) in 16S rRNA + 4 S-adenosyl-L-methionine = N(6)-dimethyladenosine(1518)/N(6)-dimethyladenosine(1519) in 16S rRNA + 4 S-adenosyl-L-homocysteine + 4 H(+). Its function is as follows. Specifically dimethylates two adjacent adenosines (A1518 and A1519) in the loop of a conserved hairpin near the 3'-end of 16S rRNA in the 30S particle. May play a critical role in biogenesis of 30S subunits. The chain is Ribosomal RNA small subunit methyltransferase A from Paraburkholderia xenovorans (strain LB400).